The following is a 166-amino-acid chain: Xanthine-guanine phosphoribosyltransferase (166 aa).

Residues 42-43 and 99-107 each bind 5-phospho-alpha-D-ribose 1-diphosphate; these read RG and DDLTDTGKT. D100 provides a ligand contact to Mg(2+). The guanine site is built by D103 and I146. Positions 103 and 146 each coordinate xanthine. Residues 103 to 107 and 145 to 146 each bind GMP; these read DTGKT and WI.

This sequence belongs to the purine/pyrimidine phosphoribosyltransferase family. XGPT subfamily. Homotetramer. Mg(2+) serves as cofactor.

It is found in the cell inner membrane. The catalysed reaction is GMP + diphosphate = guanine + 5-phospho-alpha-D-ribose 1-diphosphate. The enzyme catalyses XMP + diphosphate = xanthine + 5-phospho-alpha-D-ribose 1-diphosphate. It carries out the reaction IMP + diphosphate = hypoxanthine + 5-phospho-alpha-D-ribose 1-diphosphate. The protein operates within purine metabolism; GMP biosynthesis via salvage pathway; GMP from guanine: step 1/1. Its pathway is purine metabolism; XMP biosynthesis via salvage pathway; XMP from xanthine: step 1/1. In terms of biological role, purine salvage pathway enzyme that catalyzes the transfer of the ribosyl-5-phosphate group from 5-phospho-alpha-D-ribose 1-diphosphate (PRPP) to the N9 position of the 6-oxopurines guanine and xanthine to form the corresponding ribonucleotides GMP (guanosine 5'-monophosphate) and XMP (xanthosine 5'-monophosphate), with the release of PPi. To a lesser extent, also acts on hypoxanthine. In Mesorhizobium japonicum (strain LMG 29417 / CECT 9101 / MAFF 303099) (Mesorhizobium loti (strain MAFF 303099)), this protein is Xanthine-guanine phosphoribosyltransferase.